We begin with the raw amino-acid sequence, 357 residues long: Alanine racemase (357 aa).

Residue K34 is the Proton acceptor; specific for D-alanine of the active site. N6-(pyridoxal phosphate)lysine is present on K34. R129 contributes to the substrate binding site. The Proton acceptor; specific for L-alanine role is filled by Y254. M302 is a substrate binding site.

Belongs to the alanine racemase family. It depends on pyridoxal 5'-phosphate as a cofactor.

It carries out the reaction L-alanine = D-alanine. Its pathway is amino-acid biosynthesis; D-alanine biosynthesis; D-alanine from L-alanine: step 1/1. Catalyzes the interconversion of L-alanine and D-alanine. Likely plays an important role in supplying D-alanine, which is an indispensable constituent in the biosynthesis of bacterial cell-wall peptidoglycan. The sequence is that of Alanine racemase from Aeromonas hydrophila subsp. hydrophila (strain ATCC 7966 / DSM 30187 / BCRC 13018 / CCUG 14551 / JCM 1027 / KCTC 2358 / NCIMB 9240 / NCTC 8049).